We begin with the raw amino-acid sequence, 142 residues long: Peptide methionine sulfoxide reductase MsrB (142 aa).

The region spanning 3-126 is the MsrB domain; that stretch reads KEELKKKLSP…NSAALRFIPF (124 aa). The Nucleophile role is filled by C115.

The protein belongs to the MsrB Met sulfoxide reductase family.

It carries out the reaction L-methionyl-[protein] + [thioredoxin]-disulfide + H2O = L-methionyl-(R)-S-oxide-[protein] + [thioredoxin]-dithiol. The polypeptide is Peptide methionine sulfoxide reductase MsrB (Lactococcus lactis subsp. cremoris (strain SK11)).